The sequence spans 335 residues: Ketol-acid reductoisomerase (NADP(+)) 2 (335 aa).

In terms of domain architecture, KARI N-terminal Rossmann spans 1–180; sequence MKTYYEKDAN…GCTRAGVIET (180 aa). NADP(+) is bound by residues 24–27, Arg47, Ser51, and 81–84; these read YGSQ and DEQQ. His106 is a catalytic residue. Residue Gly132 participates in NADP(+) binding. The 146-residue stretch at 181-326 folds into the KARI C-terminal knotted domain; sequence TFQEETETDL…AELREMMSWI (146 aa). Mg(2+)-binding residues include Asp189, Glu193, Glu225, and Glu229. Ser250 lines the substrate pocket.

The protein belongs to the ketol-acid reductoisomerase family. Requires Mg(2+) as cofactor.

It carries out the reaction (2R)-2,3-dihydroxy-3-methylbutanoate + NADP(+) = (2S)-2-acetolactate + NADPH + H(+). The enzyme catalyses (2R,3R)-2,3-dihydroxy-3-methylpentanoate + NADP(+) = (S)-2-ethyl-2-hydroxy-3-oxobutanoate + NADPH + H(+). The protein operates within amino-acid biosynthesis; L-isoleucine biosynthesis; L-isoleucine from 2-oxobutanoate: step 2/4. It participates in amino-acid biosynthesis; L-valine biosynthesis; L-valine from pyruvate: step 2/4. In terms of biological role, involved in the biosynthesis of branched-chain amino acids (BCAA). Catalyzes an alkyl-migration followed by a ketol-acid reduction of (S)-2-acetolactate (S2AL) to yield (R)-2,3-dihydroxy-isovalerate. In the isomerase reaction, S2AL is rearranged via a Mg-dependent methyl migration to produce 3-hydroxy-3-methyl-2-ketobutyrate (HMKB). In the reductase reaction, this 2-ketoacid undergoes a metal-dependent reduction by NADPH to yield (R)-2,3-dihydroxy-isovalerate. This Bacillus cereus (strain ZK / E33L) protein is Ketol-acid reductoisomerase (NADP(+)) 2.